We begin with the raw amino-acid sequence, 27 residues long: Nemertide alpha-8 (27 aa).

3 cysteine pairs are disulfide-bonded: cysteine 2–cysteine 16, cysteine 9–cysteine 20, and cysteine 15–cysteine 26.

Belongs to the nemertide family. Confined to the epidermis and to the mucus layer.

The protein localises to the secreted. Its function is as follows. Highly potent toxin against both insect and some mammalian sodium channels (Nav). It potently inhibits inactivation of insect sodium channels of B.germanica (BgNav1) and also delays the inactivation of mammalian Nav with potent activity on Nav1.3/SCN3A and Nav1.4/SCN4A. 1 uM is enough to completely inhibits the inactivation, resulting in sustained non-inactivating currents. In addition, the toxin significantly enhances the recovery from inactivation, and the open state is not required for the toxin to interact with the channel. In vivo, injection into brine shrimp (Artemia salina) stops movement or causes death after 24 hours (EC(50)=0.4 uM). This chain is Nemertide alpha-8, found in Riseriellus occultus (Ribbon worm).